The sequence spans 114 residues: Large ribosomal subunit protein bL17 (114 aa).

It belongs to the bacterial ribosomal protein bL17 family. Part of the 50S ribosomal subunit. Contacts protein L32.

In Elusimicrobium minutum (strain Pei191), this protein is Large ribosomal subunit protein bL17.